The following is a 561-amino-acid chain: Arginine--tRNA ligase (561 aa).

The 'HIGH' region motif lies at 129–139 (ANPTGPLHVGH).

It belongs to the class-I aminoacyl-tRNA synthetase family. Monomer.

The protein resides in the cytoplasm. It carries out the reaction tRNA(Arg) + L-arginine + ATP = L-arginyl-tRNA(Arg) + AMP + diphosphate. This is Arginine--tRNA ligase from Bordetella petrii (strain ATCC BAA-461 / DSM 12804 / CCUG 43448).